Reading from the N-terminus, the 238-residue chain is Chloride intracellular channel exl-1 (238 aa).

It belongs to the chloride channel CLIC family. In terms of tissue distribution, expressed in the intestine, neurons and muscles.

Its subcellular location is the cytoplasm. The protein localises to the membrane. It is found in the lysosome membrane. It localises to the golgi apparatus membrane. Functionally, probable chloride channel. This chain is Chloride intracellular channel exl-1 (exl-1), found in Caenorhabditis elegans.